The primary structure comprises 207 residues: Macrophage immunometabolism regulator (207 aa).

Position 1 is an N-acetylmethionine (Met1). A disordered region spans residues 1 to 41 (MEVDVNGESRSALTTLPLPVAEASSPGKAEAEKPRCSSTPC). Phosphoserine occurs at positions 25, 140, and 167.

The protein belongs to the UNC119-binding protein family. As to quaternary structure, interacts with UNC119 and UNC119B; interaction preferentially takes place when UNC119 and UNC119B are unliganded with myristoylated proteins.

It is found in the cytoplasm. The protein localises to the cell projection. It localises to the cilium. Functionally, regulates the macrophage function, by enhancing the resolution of inflammation and wound repair functions mediated by M2 macrophages. The regulation of macrophage function is, due at least in part, to its ability to inhibit glycolysis. May play also a role in trafficking of proteins via its interaction with UNC119 and UNC119B cargo adapters: may help the release of UNC119 and UNC119B cargo or the recycling of UNC119 and UNC119B. May play a role in ciliary membrane localization via its interaction with UNC119B and protein transport into photoreceptor cells. This is Macrophage immunometabolism regulator (MACIR) from Bos taurus (Bovine).